Consider the following 130-residue polypeptide: Small ribosomal subunit protein uS9 (130 aa).

Belongs to the universal ribosomal protein uS9 family.

This is Small ribosomal subunit protein uS9 from Janthinobacterium sp. (strain Marseille) (Minibacterium massiliensis).